Here is a 508-residue protein sequence, read N- to C-terminus: Aldehyde dehydrogenase (508 aa).

Residues Glu-264 and Cys-303 contribute to the active site.

It belongs to the aldehyde dehydrogenase family.

It carries out the reaction acetaldehyde + NAD(+) + H2O = acetate + NADH + 2 H(+). It functions in the pathway organosulfur degradation. In terms of biological role, catalyzes the NAD(+)-dependent oxidation of acetaldehyde to acetate. This Paracoccus denitrificans (strain Pd 1222) protein is Aldehyde dehydrogenase.